A 180-amino-acid polypeptide reads, in one-letter code: MAEQVTEATASGVFCSRILNMVNTGDVNAIILAQRHMLDRFEKTNEMLLNFNGLSNVRLQQMSDRFAHHTRTLVEMKKDLDIIFRRIRMLKGKLAKQYPESFNNVHESPILEDDDDFDPTLKSAATTIATSEQSTESCDTSPSIISPAMSQDFEDLSQAPSDTPSVNGQILTDEELVHED.

Composition is skewed to polar residues over residues 130 to 144 (TSEQSTESCDTSPSI) and 158 to 170 (QAPSDTPSVNGQI). The interval 130–180 (TSEQSTESCDTSPSIISPAMSQDFEDLSQAPSDTPSVNGQILTDEELVHED) is disordered.

It belongs to the KXD1 family. Associates with the BLOC-1 complex.

It localises to the lysosome membrane. Its function is as follows. As part of a BORC-like complex may play a role in lysosomes movement and localization at the cell periphery. Associated with the cytosolic face of lysosomes, this complex may couple lysosomes to microtubule plus-end-directed kinesin motor. May also be involved in the biogenesis of lysosome-related organelles such as melanosomes. This is KxDL motif-containing protein 1 (kxd1) from Xenopus laevis (African clawed frog).